A 931-amino-acid polypeptide reads, in one-letter code: GPI ethanolamine phosphate transferase 1 (931 aa).

Residue Met1 is a topological domain, cytoplasmic. A helical membrane pass occupies residues 2 to 22 (LLFFALGLLIHFVFFASIFDI). Over 23-442 (YFTSPLVHGM…SYYHTYDRLF (420 aa)) the chain is Lumenal. N-linked (GlcNAc...) asparagine glycans are attached at residues Asn128, Asn192, Asn295, and Asn350. A helical membrane pass occupies residues 443 to 463 (LGINVAVGFVGWMSYTSLLII). Topologically, residues 464–480 (KSHSNIPKGTRKEGKKP) are cytoplasmic. The chain crosses the membrane as a helical span at residues 481 to 501 (HCLLLYSFIATGVLVACFLMI). Residue Gln502 is a topological domain, lumenal. A helical membrane pass occupies residues 503–523 (ACPWTYYVYCLLPVPIWYAVL). At 524–543 (REHEVIQDLVESLLTFPRSH) the chain is on the cytoplasmic side. A helical membrane pass occupies residues 544-564 (FVAYLLVFTLGIEVLVLSFFY). Residue Arg565 is a topological domain, lumenal. A helical transmembrane segment spans residues 566–586 (YMLTAGLIVFAGWPFLTQLWT). Over 587-591 (RAKIT) the chain is Cytoplasmic. Residues 592–612 (FLSWAFFSLLLAVFPLMPVVG) form a helical membrane-spanning segment. The Lumenal portion of the chain corresponds to 613 to 618 (RKPNLS). N-linked (GlcNAc...) asparagine glycosylation is present at Asn616. The chain crosses the membrane as a helical span at residues 619–639 (LVMGAGFLVLLLSLAVVTTLG). Residues 640–649 (KRNIKLVKGE) lie on the Cytoplasmic side of the membrane. A helical membrane pass occupies residues 650–670 (LLVLLLQMLSTVLSMYVVYST). The Lumenal segment spans residues 671–685 (HHSLLKKEGLPLMNQ). A helical transmembrane segment spans residues 686 to 706 (IVSWATLASSLVAPLLSSTAL). Residues 707–723 (SQRLASILLSLMSTYLL) lie on the Cytoplasmic side of the membrane. A helical membrane pass occupies residues 724–744 (LSTGYEALFPLVLSCLMFVWI). At 745–786 (QVEQETLQQPGVSCKQKLTSIQFTCDTDIAQFRQLCPDDIRR) the chain is on the lumenal side. A helical transmembrane segment spans residues 787-807 (AFFLVFFLLTAFFGTGNIASI). Topologically, residues 808-824 (NSFDLASVYCFLTVFSP) are cytoplasmic. Residues 825–845 (FMMGALMMWKILIPFVLVMCA) form a helical membrane-spanning segment. Over 846–858 (FEAVQITTQLSSK) the chain is Lumenal. Residues 859 to 879 (GLFLVVLIISDIMALHFFFLV) traverse the membrane as a helical segment. Residues 880–894 (KDSGSWLDIGTSISH) lie on the Cytoplasmic side of the membrane. The chain crosses the membrane as a helical span at residues 895–915 (YVIVMSMTIFLVFLNGLAQLL). The Lumenal segment spans residues 916-931 (TTKKLQLCGKPKSHLM).

It belongs to the PIGG/PIGN/PIGO family. PIGN subfamily.

It localises to the endoplasmic reticulum membrane. Its pathway is glycolipid biosynthesis; glycosylphosphatidylinositol-anchor biosynthesis. Ethanolamine phosphate transferase that catalyzes an ethanolamine phosphate (EtNP) transfer from phosphatidylethanolamine (PE) to the 2-OH position of the first alpha-1,4-linked mannose of the alpha-D-Man-(1-&gt;6)-alpha-D-Man-(1-&gt;4)-alpha-D-GlcN-(1-&gt;6)-(1-radyl,2-acyl-sn-glycero-3-phospho)-2-acyl-inositol (also termed H3) intermediate to generate an alpha-D-Man-(1-&gt;6)-2-PEtn-alpha-D-Man-(1-&gt;4)-alpha-D-GlcN-(1-&gt;6)-(1-radyl,2-acyl-sn-glycero-3-phospho)-2-acyl-inositol and participates in the eighth step of the glycosylphosphatidylinositol-anchor biosynthesis. May act as suppressor of replication stress and chromosome missegregation. The sequence is that of GPI ethanolamine phosphate transferase 1 from Mus musculus (Mouse).